We begin with the raw amino-acid sequence, 229 residues long: Small ribosomal subunit protein uS3 (229 aa).

One can recognise a KH type-2 domain in the interval isoleucine 18–glutamate 87.

This sequence belongs to the universal ribosomal protein uS3 family. Part of the 30S ribosomal subunit.

In terms of biological role, binds the lower part of the 30S subunit head. The chain is Small ribosomal subunit protein uS3 from Saccharolobus solfataricus (strain ATCC 35092 / DSM 1617 / JCM 11322 / P2) (Sulfolobus solfataricus).